The sequence spans 449 residues: 3-phosphoshikimate 1-carboxyvinyltransferase (449 aa).

3-phosphoshikimate is bound by residues lysine 28, serine 29, and arginine 33. Lysine 28 contacts phosphoenolpyruvate. Phosphoenolpyruvate contacts are provided by glycine 105 and arginine 133. 3-phosphoshikimate is bound by residues serine 179, glutamine 181, aspartate 332, and lysine 359. Glutamine 181 provides a ligand contact to phosphoenolpyruvate. The active-site Proton acceptor is the aspartate 332. Positions 363 and 406 each coordinate phosphoenolpyruvate.

Belongs to the EPSP synthase family. Monomer.

It is found in the cytoplasm. It catalyses the reaction 3-phosphoshikimate + phosphoenolpyruvate = 5-O-(1-carboxyvinyl)-3-phosphoshikimate + phosphate. Its pathway is metabolic intermediate biosynthesis; chorismate biosynthesis; chorismate from D-erythrose 4-phosphate and phosphoenolpyruvate: step 6/7. Its function is as follows. Catalyzes the transfer of the enolpyruvyl moiety of phosphoenolpyruvate (PEP) to the 5-hydroxyl of shikimate-3-phosphate (S3P) to produce enolpyruvyl shikimate-3-phosphate and inorganic phosphate. The polypeptide is 3-phosphoshikimate 1-carboxyvinyltransferase (Nitrobacter winogradskyi (strain ATCC 25391 / DSM 10237 / CIP 104748 / NCIMB 11846 / Nb-255)).